The sequence spans 209 residues: Large ribosomal subunit protein uL3 (209 aa).

N5-methylglutamine is present on glutamine 150.

Belongs to the universal ribosomal protein uL3 family. As to quaternary structure, part of the 50S ribosomal subunit. Forms a cluster with proteins L14 and L19. Methylated by PrmB.

In terms of biological role, one of the primary rRNA binding proteins, it binds directly near the 3'-end of the 23S rRNA, where it nucleates assembly of the 50S subunit. The chain is Large ribosomal subunit protein uL3 from Buchnera aphidicola subsp. Schizaphis graminum (strain Sg).